An 89-amino-acid polypeptide reads, in one-letter code: Large ribosomal subunit protein eL34 (89 aa).

This sequence belongs to the eukaryotic ribosomal protein eL34 family.

The polypeptide is Large ribosomal subunit protein eL34 (Methanococcus vannielii (strain ATCC 35089 / DSM 1224 / JCM 13029 / OCM 148 / SB)).